We begin with the raw amino-acid sequence, 209 residues long: Neurotrophin-4 (209 aa).

The N-terminal stretch at 1 to 21 (MLPRHSCSLLLFLFLLPSVPM) is a signal peptide. Positions 22 to 79 (EPHPPSSTLPPFLAPEWDLLSPRVALSRGAPAGPPLLFLLEAGAYGEPAGAPANRSRR) are excised as a propeptide. Asparagine 75 carries an N-linked (GlcNAc...) asparagine glycan. 3 disulfide bridges follow: cysteine 96/cysteine 169, cysteine 140/cysteine 198, and cysteine 157/cysteine 200.

This sequence belongs to the NGF-beta family.

It localises to the secreted. Its function is as follows. Target-derived survival factor for peripheral sensory sympathetic neurons. May promote ameloblast differentiation and subsequent reduction in proliferation of ameloblasts. The chain is Neurotrophin-4 (Ntf4) from Mus musculus (Mouse).